We begin with the raw amino-acid sequence, 122 residues long: Phospholipase A2 crotoxin basic subunit CBb (122 aa).

Intrachain disulfides connect Cys-26–Cys-115, Cys-28–Cys-44, Cys-43–Cys-95, Cys-49–Cys-122, Cys-50–Cys-88, Cys-57–Cys-81, and Cys-75–Cys-86. Residues Tyr-27, Gly-29, and Gly-31 each contribute to the Ca(2+) site. Residue His-47 is part of the active site. Asp-48 contributes to the Ca(2+) binding site. The active site involves Asp-89.

This sequence belongs to the phospholipase A2 family. Group II subfamily. D49 sub-subfamily. In terms of assembly, heterodimer of one of the acidic (CA1, CA2, CA3 or CA4) and one of the basic (CBa1, CBa2, CBb, CBc or CBd) subunits; non-covalently linked. The acidic subunit is non-toxic, without enzymatic activity and comprises 3 peptides that are cross-linked by 5 disulfide bridges. The basic subunit is toxic, has phospholipase A2 activity and is composed of a single chain. Multiple variants of each subunit give different crotoxin complexes that can be subdivided into 2 classes: (1) those of high toxicity, low PLA2 activity (CBb, CBc and CBd linked with high affinity to any CA) and high stability (K(d)=4.5 nM) and (2) those of moderate toxicity, high PLA2 activity (CBa2 linked with low affinity to any CA) and low stability (K(d)=25 nM). Ca(2+) serves as cofactor. In terms of tissue distribution, expressed by the venom gland.

It is found in the secreted. The catalysed reaction is a 1,2-diacyl-sn-glycero-3-phosphocholine + H2O = a 1-acyl-sn-glycero-3-phosphocholine + a fatty acid + H(+). In terms of biological role, heterodimer CA-CB: Crotoxin is a potent presynaptic neurotoxin that possesses phospholipase A2 (PLA2) activity and exerts a lethal action by blocking neuromuscular transmission. It consists of a non-covalent association of a basic and weakly toxic PLA2 subunit (CBa2, CBb, CBc, or CBd), with a small acidic, non-enzymatic and non-toxic subunit (CA1, CA2, CA3 or CA4). The complex acts by binding to a specific 48-kDa protein (R48) receptor located on presynaptic membranes, forming a transient ternary complex CA-CB-R48, followed by dissociation of the CA-CB complex and release of the CA subunit. At equilibrium, only the CB subunits remain associated with the specific crotoxin receptor. In addition to neurotoxicity, crotoxin has been found to exert myotoxicity, nephrotoxicity, and cardiovascular toxicity. Moreover, anti-inflammatory, immunomodulatory, anti-tumor and analgesic effects of crotoxin have also been reported. Its function is as follows. Monomer CBb: The basic subunit of crotoxin is a snake venom phospholipase A2 (PLA2) that exhibits weak neurotoxicity (10-fold less than the heterodimer) and strong anticoagulant effects by binding to factor Xa (F10) and inhibiting the prothrombinase activity. In addition, it shows the same effects described for the heterodimer and binds the nucleotide-binding domain (NBD1) of CFTR chloride channels and increases the channel current. PLA2 catalyzes the calcium-dependent hydrolysis of the 2-acyl groups in 3-sn-phosphoglycerides. The polypeptide is Phospholipase A2 crotoxin basic subunit CBb (Crotalus durissus terrificus (South American rattlesnake)).